The chain runs to 218 residues: Transmembrane gamma-carboxyglutamic acid protein 1 (218 aa).

A propeptide spanning residues 1 to 20 is cleaved from the precursor; the sequence is MGRVFLTGEKANSVLKRYPR. The 47-residue stretch at 20–66 folds into the Gla domain; sequence RANGFFEEIRQGNIERECKEEFCTFEEAREAFENNEKTKEFWSTYTK. Residues 21-80 lie on the Extracellular side of the membrane; the sequence is ANGFFEEIRQGNIERECKEEFCTFEEAREAFENNEKTKEFWSTYTKAQQGESNRGSDWFQ. Cys-37 and Cys-42 form a disulfide bridge. Residues 81–101 traverse the membrane as a helical segment; sequence FYLTFPLIFGLFIILLVIFLI. Residues 102 to 218 are Cytoplasmic-facing; sequence WRCFLRNKTR…PMVPVVTTIK (117 aa). A disordered region spans residues 161 to 195; it reads TRLSNCDPPPTYEEATGQVNLQRSETEPHLDPPPE.

In terms of processing, gla residues are produced after subsequent post-translational modifications of glutamate by a vitamin K-dependent gamma-carboxylase.

It localises to the membrane. The protein is Transmembrane gamma-carboxyglutamic acid protein 1 (PRRG1) of Pongo abelii (Sumatran orangutan).